A 418-amino-acid polypeptide reads, in one-letter code: Aspartate aminotransferase 1 (418 aa).

The residue at position 264 (K264) is an N6-(pyridoxal phosphate)lysine.

It belongs to the class-I pyridoxal-phosphate-dependent aminotransferase family. Homodimer. It depends on pyridoxal 5'-phosphate as a cofactor. In terms of tissue distribution, nodules, roots, stems and leaves, in decreasing order of aspartate aminotransferase 1 concentration. Is the predominant aspartate aminotransferase isoenzyme in roots.

The protein localises to the cytoplasm. It carries out the reaction L-aspartate + 2-oxoglutarate = oxaloacetate + L-glutamate. Its function is as follows. Important for the metabolism of amino acids and Krebs-cycle related organic acids. In plants, it is involved in nitrogen metabolism and in aspects of carbon and energy metabolism. This chain is Aspartate aminotransferase 1 (AAT-1), found in Medicago sativa (Alfalfa).